The sequence spans 151 residues: MVKLNELFPKHGSRKAKRRIGLGVGSGLGRSATKGMKGQSSRSGNTKKESKEGGQMPLYRRVPKSGFSNATFAKRFDYVNIGSLEKACKAGEEVTPETMKTLGLVKCAKRVKVLANGELKKGLKVSAHGFSATAKAAIEKAGGSVTVIEKK.

A disordered region spans residues 1-62 (MVKLNELFPK…GGQMPLYRRV (62 aa)). Residues 11-20 (HGSRKAKRRI) show a composition bias toward basic residues.

This sequence belongs to the universal ribosomal protein uL15 family. Part of the 50S ribosomal subunit.

Functionally, binds to the 23S rRNA. In Elusimicrobium minutum (strain Pei191), this protein is Large ribosomal subunit protein uL15.